The primary structure comprises 456 residues: UDP-glycosyltransferase 84B1 (456 aa).

UDP-alpha-D-glucose contacts are provided by residues S278, 332–334, 349–357, and 371–374; these read SPQ, HCGWNSTME, and WTDQ.

The protein belongs to the UDP-glycosyltransferase family.

Possesses low quercetin 7-O-glucosyltransferase activity in vitro. The chain is UDP-glycosyltransferase 84B1 (UGT84B1) from Arabidopsis thaliana (Mouse-ear cress).